The following is a 487-amino-acid chain: 2-aminomuconic semialdehyde dehydrogenase (487 aa).

231-236 (GSQPTA) contributes to the NAD(+) binding site. Glu253 functions as the Proton acceptor in the catalytic mechanism. Cys287 (nucleophile) is an active-site residue.

This sequence belongs to the aldehyde dehydrogenase family.

The protein resides in the cytoplasm. It carries out the reaction 2-aminomuconate 6-semialdehyde + NAD(+) + H2O = (2Z,4E)-2-aminomuconate + NADH + 2 H(+). The protein operates within amino-acid degradation; L-kynurenine degradation. In terms of biological role, catalyzes the NAD-dependent oxidation of 2-aminomuconic semialdehyde of the kynurenine metabolic pathway in L-tryptophan degradation. The sequence is that of 2-aminomuconic semialdehyde dehydrogenase (ALDH8A1) from Bos taurus (Bovine).